The following is a 165-amino-acid chain: Transcription antitermination protein NusB (165 aa).

Belongs to the NusB family.

In terms of biological role, involved in transcription antitermination. Required for transcription of ribosomal RNA (rRNA) genes. Binds specifically to the boxA antiterminator sequence of the ribosomal RNA (rrn) operons. This chain is Transcription antitermination protein NusB, found in Chlorobium phaeobacteroides (strain DSM 266 / SMG 266 / 2430).